The chain runs to 399 residues: Tryptophan synthase beta chain (399 aa).

N6-(pyridoxal phosphate)lysine is present on lysine 92.

It belongs to the TrpB family. As to quaternary structure, tetramer of two alpha and two beta chains. Requires pyridoxal 5'-phosphate as cofactor.

It carries out the reaction (1S,2R)-1-C-(indol-3-yl)glycerol 3-phosphate + L-serine = D-glyceraldehyde 3-phosphate + L-tryptophan + H2O. It participates in amino-acid biosynthesis; L-tryptophan biosynthesis; L-tryptophan from chorismate: step 5/5. In terms of biological role, the beta subunit is responsible for the synthesis of L-tryptophan from indole and L-serine. This is Tryptophan synthase beta chain from Acidithiobacillus ferrooxidans (strain ATCC 23270 / DSM 14882 / CIP 104768 / NCIMB 8455) (Ferrobacillus ferrooxidans (strain ATCC 23270)).